Consider the following 380-residue polypeptide: tRNA pseudouridine synthase B (380 aa).

Asp-63 acts as the Nucleophile in catalysis. The tract at residues 309 to 339 is disordered; that stretch reads QNVEDDNDDNDDNDDNDDNDDNDDNDDNDDN. Positions 311–338 are enriched in acidic residues; the sequence is VEDDNDDNDDNDDNDDNDDNDDNDDNDD.

Belongs to the pseudouridine synthase TruB family. Type 1 subfamily.

The catalysed reaction is uridine(55) in tRNA = pseudouridine(55) in tRNA. Responsible for synthesis of pseudouridine from uracil-55 in the psi GC loop of transfer RNAs. The chain is tRNA pseudouridine synthase B from Psychrobacter arcticus (strain DSM 17307 / VKM B-2377 / 273-4).